A 255-amino-acid chain; its full sequence is Thiazole synthase (255 aa).

Lys96 functions as the Schiff-base intermediate with DXP in the catalytic mechanism. 1-deoxy-D-xylulose 5-phosphate contacts are provided by residues Gly157, 183–184, and 205–206; these read AG and NT.

The protein belongs to the ThiG family. Homotetramer. Forms heterodimers with either ThiH or ThiS.

It localises to the cytoplasm. It catalyses the reaction [ThiS sulfur-carrier protein]-C-terminal-Gly-aminoethanethioate + 2-iminoacetate + 1-deoxy-D-xylulose 5-phosphate = [ThiS sulfur-carrier protein]-C-terminal Gly-Gly + 2-[(2R,5Z)-2-carboxy-4-methylthiazol-5(2H)-ylidene]ethyl phosphate + 2 H2O + H(+). It participates in cofactor biosynthesis; thiamine diphosphate biosynthesis. Functionally, catalyzes the rearrangement of 1-deoxy-D-xylulose 5-phosphate (DXP) to produce the thiazole phosphate moiety of thiamine. Sulfur is provided by the thiocarboxylate moiety of the carrier protein ThiS. In vitro, sulfur can be provided by H(2)S. This Heliobacterium modesticaldum (strain ATCC 51547 / Ice1) protein is Thiazole synthase.